We begin with the raw amino-acid sequence, 90 residues long: Small ribosomal subunit protein bS16 (90 aa).

This sequence belongs to the bacterial ribosomal protein bS16 family.

In Geobacillus thermodenitrificans (strain NG80-2), this protein is Small ribosomal subunit protein bS16.